The sequence spans 395 residues: Elongation factor Tu (395 aa).

The tr-type G domain maps to 10 to 204 (KPHVNIGTIG…EVDAYIPTPE (195 aa)). The segment at 19–26 (GHVDHGKT) is G1. Residue 19 to 26 (GHVDHGKT) participates in GTP binding. Mg(2+) is bound at residue T26. Positions 60–64 (GITIS) are G2. The G3 stretch occupies residues 81–84 (DCPG). GTP contacts are provided by residues 81 to 85 (DCPGH) and 136 to 139 (NKCD). Positions 136–139 (NKCD) are G4. A G5 region spans residues 174 to 176 (SAL).

Belongs to the TRAFAC class translation factor GTPase superfamily. Classic translation factor GTPase family. EF-Tu/EF-1A subfamily. Monomer.

It localises to the cytoplasm. The catalysed reaction is GTP + H2O = GDP + phosphate + H(+). Functionally, GTP hydrolase that promotes the GTP-dependent binding of aminoacyl-tRNA to the A-site of ribosomes during protein biosynthesis. This chain is Elongation factor Tu, found in Bacillus cereus (strain ATCC 10987 / NRS 248).